The primary structure comprises 372 residues: MTALKHTPLNAAHRALNARMVDFGGWDMPVNYGSQIEEHEAVRTDAGMFDVSHMCVVDFTGSRARAFFEYAIANNVGKLKTPGKALYSCLLNPQGGVIDDLIVYYFTEDFFRVVVNAGTADKDIAWFNQLNEQGGYGLTIAPRRDFAIVAVQGPNAREKVWATVPAARAATSELKPFNAAQVAGTPFGDLTVARTGYTGEDGFEVIVPAVHVEALWNALQQHGVRPCGLGARDTLRLEAGMNLYGQDMDDTVSPLDAGLAWTVDLSTPRAFVGREALERDGTRAAFVGLILQKENGKAGGVLRAHQKVVTPHGEGEITSGTFSPSMQESIAFARVPTAVQVGDTVHVQIRDKQLPARVVKLPFVRNGKVLAA.

This sequence belongs to the GcvT family. The glycine cleavage system is composed of four proteins: P, T, L and H.

The catalysed reaction is N(6)-[(R)-S(8)-aminomethyldihydrolipoyl]-L-lysyl-[protein] + (6S)-5,6,7,8-tetrahydrofolate = N(6)-[(R)-dihydrolipoyl]-L-lysyl-[protein] + (6R)-5,10-methylene-5,6,7,8-tetrahydrofolate + NH4(+). The glycine cleavage system catalyzes the degradation of glycine. The chain is Aminomethyltransferase from Burkholderia multivorans (strain ATCC 17616 / 249).